Reading from the N-terminus, the 343-residue chain is Ribosomal RNA small subunit methyltransferase C (343 aa).

It belongs to the methyltransferase superfamily. RsmC family. In terms of assembly, monomer.

Its subcellular location is the cytoplasm. It catalyses the reaction guanosine(1207) in 16S rRNA + S-adenosyl-L-methionine = N(2)-methylguanosine(1207) in 16S rRNA + S-adenosyl-L-homocysteine + H(+). Its function is as follows. Specifically methylates the guanine in position 1207 of 16S rRNA in the 30S particle. The polypeptide is Ribosomal RNA small subunit methyltransferase C (Escherichia coli O81 (strain ED1a)).